The sequence spans 314 residues: MQKPLAIFLMGPTASGKTDLAIALRQQIPVEVISVDSALIYKGMDIGTAKPSKAELELTPHRLIDILDPSESYSVMNFREDALREMADITAQGKIPLLVGGTMLYYKALLDGLSPLPSADPDIRAEIEAKAEQIGWAGLHQELVNIDPISAKRINPNDSQRINRALEVFYISGKTMTELTAQQGEAIPYEIMQFAIVPQERAVLHQRIEQRFHKMINLGFEQEVRRLYQRGDLNVDLPSIRCVGYRQMWEYLEGQTSLDEAIFKGICATRQLAKRQITWLRGWTSEIEWLDSLDPENSYKKMIEKVQQKHLKLW.

11–18 (GPTASGKT) lines the ATP pocket. 13-18 (TASGKT) lines the substrate pocket. Interaction with substrate tRNA stretches follow at residues 36–39 (DSAL), 160–164 (QRINR), 241–246 (RCVGYR), and 274–281 (KRQITWLR).

The protein belongs to the IPP transferase family. As to quaternary structure, monomer. Mg(2+) serves as cofactor.

The enzyme catalyses adenosine(37) in tRNA + dimethylallyl diphosphate = N(6)-dimethylallyladenosine(37) in tRNA + diphosphate. Functionally, catalyzes the transfer of a dimethylallyl group onto the adenine at position 37 in tRNAs that read codons beginning with uridine, leading to the formation of N6-(dimethylallyl)adenosine (i(6)A). This Glaesserella parasuis serovar 5 (strain SH0165) (Haemophilus parasuis) protein is tRNA dimethylallyltransferase.